The primary structure comprises 189 residues: Penicillin-binding protein activator LpoB (189 aa).

The signal sequence occupies residues 1–16 (MRRILFVALSVMFLAG). Residue Cys17 is the site of N-palmitoyl cysteine attachment. A lipid anchor (S-diacylglycerol cysteine) is attached at Cys17. The segment at 18–52 (PSLPPEQPEPPTPVVPVTPSEKPTPPSEKVPEPPK) is disordered. Residues 19–45 (SLPPEQPEPPTPVVPVTPSEKPTPPSE) are compositionally biased toward pro residues.

This sequence belongs to the LpoB family. Interacts with PBP1b.

The protein localises to the cell outer membrane. Functionally, regulator of peptidoglycan synthesis that is essential for the function of penicillin-binding protein 1B (PBP1b). This Photorhabdus laumondii subsp. laumondii (strain DSM 15139 / CIP 105565 / TT01) (Photorhabdus luminescens subsp. laumondii) protein is Penicillin-binding protein activator LpoB.